Reading from the N-terminus, the 310-residue chain is ADP-L-glycero-D-manno-heptose-6-epimerase (310 aa).

NADP(+) contacts are provided by residues Phe10–Ile11, Asp31–Asn32, Lys38, Lys53, Glu75–Ser79, and Asn92. Tyr140 acts as the Proton acceptor in catalysis. Lys144 is an NADP(+) binding site. Asn169 is a substrate binding site. Positions 170 and 178 each coordinate NADP(+). Lys178 (proton acceptor) is an active-site residue. Residues Ser180, His187, Phe201–Ser204, Arg209, and Tyr272 each bind substrate.

It belongs to the NAD(P)-dependent epimerase/dehydratase family. HldD subfamily. In terms of assembly, homopentamer. NADP(+) serves as cofactor.

The enzyme catalyses ADP-D-glycero-beta-D-manno-heptose = ADP-L-glycero-beta-D-manno-heptose. The protein operates within nucleotide-sugar biosynthesis; ADP-L-glycero-beta-D-manno-heptose biosynthesis; ADP-L-glycero-beta-D-manno-heptose from D-glycero-beta-D-manno-heptose 7-phosphate: step 4/4. Functionally, catalyzes the interconversion between ADP-D-glycero-beta-D-manno-heptose and ADP-L-glycero-beta-D-manno-heptose via an epimerization at carbon 6 of the heptose. This chain is ADP-L-glycero-D-manno-heptose-6-epimerase, found in Salmonella paratyphi C (strain RKS4594).